Here is a 526-residue protein sequence, read N- to C-terminus: Putative D-lactate dehydrogenase C713.03, mitochondrial (526 aa).

Residues 93–272 enclose the FAD-binding PCMH-type domain; that stretch reads YRGKTQLALK…TKLSVICPKR (180 aa).

This sequence belongs to the FAD-binding oxidoreductase/transferase type 4 family. FAD is required as a cofactor.

It localises to the mitochondrion matrix. It carries out the reaction (R)-lactate + 2 Fe(III)-[cytochrome c] = 2 Fe(II)-[cytochrome c] + pyruvate + 2 H(+). The chain is Putative D-lactate dehydrogenase C713.03, mitochondrial from Schizosaccharomyces pombe (strain 972 / ATCC 24843) (Fission yeast).